We begin with the raw amino-acid sequence, 248 residues long: tRNA pseudouridine synthase A (248 aa).

D53 acts as the Nucleophile in catalysis. Y111 provides a ligand contact to substrate.

Belongs to the tRNA pseudouridine synthase TruA family. As to quaternary structure, homodimer.

It catalyses the reaction uridine(38/39/40) in tRNA = pseudouridine(38/39/40) in tRNA. Functionally, formation of pseudouridine at positions 38, 39 and 40 in the anticodon stem and loop of transfer RNAs. The protein is tRNA pseudouridine synthase A of Streptococcus thermophilus (strain ATCC BAA-491 / LMD-9).